A 2225-amino-acid chain; its full sequence is Nonribisomal peptide synthetase notE' (2225 aa).

The disordered stretch occupies residues T24 to S59. The span at S28 to P49 shows a compositional bias: low complexity. The interval Q83–R482 is adenylation 1. The region spanning S614 to T690 is the Carrier 1 domain. O-(pantetheine 4'-phosphoryl)serine is present on S651. Residues E730–L1142 form a condensation 1 region. The segment at A1164–R1563 is adenylation 2. In terms of domain architecture, Carrier 2 spans P1699–Q1775. O-(pantetheine 4'-phosphoryl)serine is present on S1736. A condensation 2 region spans residues F1827 to M2138.

Belongs to the NRP synthetase family.

It catalyses the reaction L-proline + L-tryptophan + 2 ATP = brevianamide F + 2 AMP + 2 diphosphate + 2 H(+). The protein operates within alkaloid biosynthesis. In terms of biological role, nonribisomal peptide synthetase; part of the gene cluster that mediates the biosynthesis of notoamide, a fungal indole alkaloid that belongs to a family of natural products containing a characteristic bicyclo[2.2.2]diazaoctane core. The first step of notoamide biosynthesis involves coupling of L-proline and L-tryptophan by the bimodular NRPS notE', to produce cyclo-L-tryptophan-L-proline called brevianamide F. The reverse prenyltransferase notF' then acts as a deoxybrevianamide E synthase and converts brevianamide F to deoxybrevianamide E via reverse prenylation at C-2 of the indole ring leading to the bicyclo[2.2.2]diazaoctane core. Deoxybrevianamide E is further hydroxylated at C-6 of the indole ring, likely catalyzed by the cytochrome P450 monooxygenase notG', to yield 6-hydroxy-deoxybrevianamide E. 6-hydroxy-deoxybrevianamide E is a specific substrate of the prenyltransferase notC' for normal prenylation at C-7 to produce 6-hydroxy-7-prenyl-deoxybrevianamide, also called notoamide S. As the proposed pivotal branching point in notoamide biosynthesis, notoamide S can be diverted to notoamide E through an oxidative pyran ring closure putatively catalyzed by either notH' cytochrome P450 monooxygenase or the notD' FAD-linked oxidoreductase. This step would be followed by an indole 2,3-epoxidation-initiated pinacol-like rearrangement catalyzed by the notB' FAD-dependent monooxygenase leading to the formation of notoamide C and notoamide D. On the other hand notoamide S is converted to notoamide T by notH' (or notD'), a bifunctional oxidase that also functions as the intramolecular Diels-Alderase responsible for generation of (-)-notoamide T. To generate antipodal (+)-notoaminide T, notH (or notD) in Aspergillus strain MF297-2 is expected to catalyze a Diels-Alder reaction leading to the opposite stereochemistry. The remaining oxidoreductase notD' (or notH') likely catalyzes the oxidative pyran ring formation to yield (-)-stephacidin A. The FAD-dependent monooxygenase notI' is highly similar to notB' and is predicted to catalyze a similar conversion from (-)-stephacidin A to (+)-notoamide B via the 2,3-epoxidation of (-)-stephacidin A followed by a pinacol-type rearrangement. Finally, it remains unclear which enzyme could be responsible for the final hydroxylation steps leading to notoamide A and sclerotiamide. This chain is Nonribisomal peptide synthetase notE', found in Aspergillus versicolor.